The following is a 612-amino-acid chain: Dihydroxy-acid dehydratase (612 aa).

Asp81 contributes to the Mg(2+) binding site. Cys122 lines the [2Fe-2S] cluster pocket. Residues Asp123 and Lys124 each contribute to the Mg(2+) site. Position 124 is an N6-carboxylysine (Lys124). [2Fe-2S] cluster is bound at residue Cys193. Glu489 contributes to the Mg(2+) binding site. Ser515 serves as the catalytic Proton acceptor.

This sequence belongs to the IlvD/Edd family. In terms of assembly, homodimer. [2Fe-2S] cluster is required as a cofactor. Mg(2+) serves as cofactor.

It catalyses the reaction (2R)-2,3-dihydroxy-3-methylbutanoate = 3-methyl-2-oxobutanoate + H2O. The catalysed reaction is (2R,3R)-2,3-dihydroxy-3-methylpentanoate = (S)-3-methyl-2-oxopentanoate + H2O. It functions in the pathway amino-acid biosynthesis; L-isoleucine biosynthesis; L-isoleucine from 2-oxobutanoate: step 3/4. Its pathway is amino-acid biosynthesis; L-valine biosynthesis; L-valine from pyruvate: step 3/4. Its function is as follows. Functions in the biosynthesis of branched-chain amino acids. Catalyzes the dehydration of (2R,3R)-2,3-dihydroxy-3-methylpentanoate (2,3-dihydroxy-3-methylvalerate) into 2-oxo-3-methylpentanoate (2-oxo-3-methylvalerate) and of (2R)-2,3-dihydroxy-3-methylbutanoate (2,3-dihydroxyisovalerate) into 2-oxo-3-methylbutanoate (2-oxoisovalerate), the penultimate precursor to L-isoleucine and L-valine, respectively. The protein is Dihydroxy-acid dehydratase of Stenotrophomonas maltophilia (strain R551-3).